Here is a 315-residue protein sequence, read N- to C-terminus: Putative protein phosphatase 2C 24 (315 aa).

The 244-residue stretch at 71 to 314 (ALRMEAASCF…DDITVVVAYI (244 aa)) folds into the PPM-type phosphatase domain. Residues D102, G103, D238, and D305 each contribute to the Mn(2+) site.

The protein belongs to the PP2C family. Requires Mg(2+) as cofactor. Mn(2+) serves as cofactor.

The enzyme catalyses O-phospho-L-seryl-[protein] + H2O = L-seryl-[protein] + phosphate. The catalysed reaction is O-phospho-L-threonyl-[protein] + H2O = L-threonyl-[protein] + phosphate. The sequence is that of Putative protein phosphatase 2C 24 from Oryza sativa subsp. japonica (Rice).